We begin with the raw amino-acid sequence, 200 residues long: NADH-quinone oxidoreductase subunit C (200 aa).

It belongs to the complex I 30 kDa subunit family. As to quaternary structure, NDH-1 is composed of 14 different subunits. Subunits NuoB, C, D, E, F, and G constitute the peripheral sector of the complex.

The protein localises to the cell inner membrane. It catalyses the reaction a quinone + NADH + 5 H(+)(in) = a quinol + NAD(+) + 4 H(+)(out). In terms of biological role, NDH-1 shuttles electrons from NADH, via FMN and iron-sulfur (Fe-S) centers, to quinones in the respiratory chain. The immediate electron acceptor for the enzyme in this species is believed to be ubiquinone. Couples the redox reaction to proton translocation (for every two electrons transferred, four hydrogen ions are translocated across the cytoplasmic membrane), and thus conserves the redox energy in a proton gradient. The polypeptide is NADH-quinone oxidoreductase subunit C (Chelativorans sp. (strain BNC1)).